A 124-amino-acid polypeptide reads, in one-letter code: Ribonuclease pancreatic (124 aa).

The segment covering 1–13 (KESAAAKFERQHM) has biased composition (basic and acidic residues). A disordered region spans residues 1 to 24 (KESAAAKFERQHMDPSTSSASSSN). Substrate-binding residues include Lys-7 and Arg-10. His-12 acts as the Proton acceptor in catalysis. 4 cysteine pairs are disulfide-bonded: Cys-26–Cys-84, Cys-40–Cys-95, Cys-58–Cys-110, and Cys-65–Cys-72. Residues 41 to 45 (KPVNT), Lys-66, and Arg-85 contribute to the substrate site. Residue His-119 is the Proton donor of the active site.

The protein belongs to the pancreatic ribonuclease family. As to quaternary structure, monomer. Interacts with and forms tight 1:1 complexes with RNH1. Dimerization of two such complexes may occur. Interaction with RNH1 inhibits this protein. In terms of tissue distribution, pancreas.

The protein localises to the secreted. It carries out the reaction an [RNA] containing cytidine + H2O = an [RNA]-3'-cytidine-3'-phosphate + a 5'-hydroxy-ribonucleotide-3'-[RNA].. The enzyme catalyses an [RNA] containing uridine + H2O = an [RNA]-3'-uridine-3'-phosphate + a 5'-hydroxy-ribonucleotide-3'-[RNA].. Endonuclease that catalyzes the cleavage of RNA on the 3' side of pyrimidine nucleotides. Acts on single-stranded and double-stranded RNA. This chain is Ribonuclease pancreatic (RNASE1), found in Cervus elaphus (Red deer).